A 132-amino-acid chain; its full sequence is Small ribosomal subunit protein uS8 (132 aa).

It belongs to the universal ribosomal protein uS8 family. As to quaternary structure, part of the 30S ribosomal subunit. Contacts proteins S5 and S12.

Functionally, one of the primary rRNA binding proteins, it binds directly to 16S rRNA central domain where it helps coordinate assembly of the platform of the 30S subunit. This is Small ribosomal subunit protein uS8 from Cereibacter sphaeroides (strain ATCC 17029 / ATH 2.4.9) (Rhodobacter sphaeroides).